We begin with the raw amino-acid sequence, 956 residues long: MNPTITEHDFRFPRRPAAPGRDPGSDSSDDPLPASLRELNSDRQSAFNDAQNKLARTEAFEDLRNGMARVKDTPELLQEQDPLAAQVWRFFSKTKTMLPNQERMENLTWRMMHVNLRKRQQEESARISSPPLKTNAPSGIAQQLRQTPTQKKSSAGEMSLDDFIDSSHGSATSGLASSSPEAGKPDSTSTNAISSAIPINKSRKNEVAAQSQFNPQSVPAAAQRGRMDNEFGYLKRHHRKTSIDDRKTTRKRPRGCSPFQVPSIVTDTLSNDLDADAGFNDYTLDSTNGINVSQPMTTNGRSPFTIDAFNVPSEPMIHSAGPYQQNFSFSPSTSPMASNGFPQHMFNGQSITNSLANPDLYSPPGSAYQSQVSTPHPMNENGDGSFFFGNGMDVRHQRSHSFRQPSATQNMQTQPFSYNGNGGGGFFPQSMASNGMSSSYATSGNTFGHIDPAQVFQNEQTAQSPGFNMMQENNAFNFGGHSDDEEDGGVFADRNLALSSEFSPGAMDEPAVDFGTNPMGWDATLPGNFSTQAARYPAGPPRRQNTIGGMPSEFGEKNGDYAEGGLARSQSQSFHGNQADARRRIPRNASTTAIPNSQMQYEQQGVQGHTNSPPADMANGHTSGFSSVVHSRPSSPPPGSKNGSTTNLQQQGNNQGGDAPTTCTNCATQTTPLWRRNPEGQPLCNACGLFLKLHGVVRPLSLKTDVIKKRNRGSGSNVPGATSGSRSKKGATSTAVSGTNTRKNSSLAISRTASTTNVQVAPTPAIAPAASQSRAGSANEGESPMSGGGNTAGSTPTSHNSGGSVAVGGKGVVPIAAAPPKNMPGPGAAAAARTVALGPKRQRRHSKPSPANASLIGMNNANHSDAMEVDSPENSTGSNEAATRPSGFGTTATSASFAGLTSNSFGMSASTRSMITPGMLGGGMSTSALSSTGGLLSSGSAAATVPQEWDWLTMSL.

Basic and acidic residues predominate over residues 1 to 12; the sequence is MNPTITEHDFRF. Disordered stretches follow at residues 1-51, 120-222, 240-262, 348-373, and 524-661; these read MNPT…NDAQ, QQEE…PAAA, KTSIDDRKTTRKRPRGCSPFQVP, GQSITNSLANPDLYSPPGSAYQSQVS, and TLPG…DAPT. The segment covering 15–37 has biased composition (low complexity); the sequence is RPAAPGRDPGSDSSDDPLPASLR. 4 stretches are compositionally biased toward polar residues: residues 42–51, 131–153, 167–194, and 208–217; these read DRQSAFNDAQ, PLKTNAPSGIAQQLRQTPTQKKS, SHGSATSGLASSSPEAGKPDSTSTNAIS, and AAQSQFNPQS. Residues 588–613 show a composition bias toward polar residues; it reads NASTTAIPNSQMQYEQQGVQGHTNSP. 2 stretches are compositionally biased toward low complexity: residues 623-633 and 640-661; these read SGFSSVVHSRP and SKNGSTTNLQQQGNNQGGDAPT. The GATA-type zinc finger occupies 663–687; sequence CTNCATQTTPLWRRNPEGQPLCNAC. The interval 708–890 is disordered; that stretch reads KKRNRGSGSN…AATRPSGFGT (183 aa). Residues 713-760 are compositionally biased toward polar residues; it reads GSGSNVPGATSGSRSKKGATSTAVSGTNTRKNSSLAISRTASTTNVQV. A compositionally biased stretch (low complexity) spans 812–839; it reads VVPIAAAPPKNMPGPGAAAAARTVALGP. Polar residues-rich tracts occupy residues 849-863 and 872-881; these read SPANASLIGMNNANH and PENSTGSNEA.

The protein resides in the nucleus. Its function is as follows. Major nitrogen regulatory protein; activates expression of nitrogen-regulated genes. The sequence is that of Nitrogen regulatory protein NUT1 (NUT1) from Pyricularia oryzae (strain 70-15 / ATCC MYA-4617 / FGSC 8958) (Rice blast fungus).